The chain runs to 970 residues: Disks large 1 tumor suppressor protein (970 aa).

The 61-residue stretch at 4–64 (KKQEAHRALE…FYELTLLDDS (61 aa)) folds into the L27 domain. The tract at residues 161-209 (TENAKEPTVEQQQKQQQAQQRSSRSPQQQNPQQQQGSKSRSGSQTVNGD) is disordered. Positions 171–204 (QQQKQQQAQQRSSRSPQQQNPQQQQGSKSRSGSQ) are enriched in low complexity. PDZ domains follow at residues 216–303 (DIQL…KRKR) and 330–421 (EIDL…GKTQ). Residues 424 to 477 (TTSASGGGGGGLSSGQQLSQSQSQLATSQSQSQVHQQQHATPMVNSQSTEPGSR) form a disordered region. Residues 437-462 (SGQQLSQSQSQLATSQSQSQVHQQQH) show a composition bias toward low complexity. Residues 466 to 477 (MVNSQSTEPGSR) are compositionally biased toward polar residues. Ser-496 carries the phosphoserine modification. One can recognise a PDZ 3 domain in the interval 506–587 (TITIQKGPQG…VVTLLAQYRP (82 aa)). Residues 620 to 690 (KRSLYVRALF…PSKRRWERKM (71 aa)) enclose the SH3 domain. Thr-714 carries the phosphothreonine modification. The region spanning 780–955 (TRPVIILGPL…IYSKVKSMIW (176 aa)) is the Guanylate kinase-like domain.

Belongs to the MAGUK family. In terms of tissue distribution, during the cellular blastoderm stage, isoform B, isoform F, isoform H, isoform I and isoform L expression is localized to the cell borders. From stage 11 onwards, expression is found predominantly in the developing nervous system: axon bundles in the ventral cord and the brain. Stage 14 and 15 embryos exhibit expression in the developing body wall muscle. Expression in neuropil regions of the CNS and at NMJs persists through to larval development. Other isoforms show expression in embryonic epithelial cells. In larvae, expression is seen as a belt around salivary glands, imaginal disks and proventriculus. Expressed in adult reproductive tissues. In epithelia, coexpressed with scrib throughout development.

The protein localises to the cytoplasm. It is found in the cell membrane. Its subcellular location is the basolateral cell membrane. It localises to the cytoskeleton. The protein resides in the cell junction. The protein localises to the septate junction. In terms of biological role, during embryonic development, some isoforms are essential for proper neuronal differentiation and organization. Required for cell polarity; maintenance of apicobasal polarity. Plays a critical role at septate junctions in cellular growth control during larval development. The presence of a guanylate kinase domain suggests involvement in cellular adhesion as well as signal transduction to control cellular proliferation. The polypeptide is Disks large 1 tumor suppressor protein (dlg1) (Drosophila melanogaster (Fruit fly)).